The sequence spans 167 residues: NAD(P)H-quinone oxidoreductase subunit I, chloroplastic (167 aa).

2 4Fe-4S ferredoxin-type domains span residues 55-84 and 95-124; these read GRIH…VDWK and LNYS…MTEE. 8 residues coordinate [4Fe-4S] cluster: Cys64, Cys67, Cys70, Cys74, Cys104, Cys107, Cys110, and Cys114.

It belongs to the complex I 23 kDa subunit family. NDH is composed of at least 16 different subunits, 5 of which are encoded in the nucleus. Requires [4Fe-4S] cluster as cofactor.

The protein resides in the plastid. It is found in the chloroplast thylakoid membrane. The enzyme catalyses a plastoquinone + NADH + (n+1) H(+)(in) = a plastoquinol + NAD(+) + n H(+)(out). It carries out the reaction a plastoquinone + NADPH + (n+1) H(+)(in) = a plastoquinol + NADP(+) + n H(+)(out). NDH shuttles electrons from NAD(P)H:plastoquinone, via FMN and iron-sulfur (Fe-S) centers, to quinones in the photosynthetic chain and possibly in a chloroplast respiratory chain. The immediate electron acceptor for the enzyme in this species is believed to be plastoquinone. Couples the redox reaction to proton translocation, and thus conserves the redox energy in a proton gradient. The chain is NAD(P)H-quinone oxidoreductase subunit I, chloroplastic from Gossypium barbadense (Sea Island cotton).